Consider the following 149-residue polypeptide: Hut operon positive regulatory protein (149 aa).

Belongs to the HutP family. In terms of assembly, homohexamer.

Antiterminator that binds to cis-acting regulatory sequences on the mRNA in the presence of histidine, thereby suppressing transcription termination and activating the hut operon for histidine utilization. The polypeptide is Hut operon positive regulatory protein (Geobacillus sp. (strain WCH70)).